The sequence spans 256 residues: Thiazole synthase (256 aa).

The active-site Schiff-base intermediate with DXP is Lys-95. 1-deoxy-D-xylulose 5-phosphate contacts are provided by residues Gly-156, 182–183 (AG), and 204–205 (NT).

Belongs to the ThiG family. In terms of assembly, homotetramer. Forms heterodimers with either ThiH or ThiS.

Its subcellular location is the cytoplasm. The catalysed reaction is [ThiS sulfur-carrier protein]-C-terminal-Gly-aminoethanethioate + 2-iminoacetate + 1-deoxy-D-xylulose 5-phosphate = [ThiS sulfur-carrier protein]-C-terminal Gly-Gly + 2-[(2R,5Z)-2-carboxy-4-methylthiazol-5(2H)-ylidene]ethyl phosphate + 2 H2O + H(+). It participates in cofactor biosynthesis; thiamine diphosphate biosynthesis. Its function is as follows. Catalyzes the rearrangement of 1-deoxy-D-xylulose 5-phosphate (DXP) to produce the thiazole phosphate moiety of thiamine. Sulfur is provided by the thiocarboxylate moiety of the carrier protein ThiS. In vitro, sulfur can be provided by H(2)S. The chain is Thiazole synthase from Escherichia coli O81 (strain ED1a).